A 462-amino-acid polypeptide reads, in one-letter code: Argininosuccinate lyase (462 aa).

The protein belongs to the lyase 1 family. Argininosuccinate lyase subfamily.

The protein resides in the cytoplasm. The enzyme catalyses 2-(N(omega)-L-arginino)succinate = fumarate + L-arginine. Its pathway is amino-acid biosynthesis; L-arginine biosynthesis; L-arginine from L-ornithine and carbamoyl phosphate: step 3/3. The chain is Argininosuccinate lyase from Streptococcus agalactiae serotype III (strain NEM316).